The primary structure comprises 502 residues: MQHDGSFNPEARFDAVLVGAGIMSATLAALLHELDTQLRILLVERLEAPALESSAAVNNAGTGHAANCELNYTPIQADGTVATAKAVAINTSFERSLEFWSSLQERGDLDTSSFLHQAAHISAVWTPENIAFLRQRFSQLKELPAFARMRWSEDQSELTEWMPLVMAGRDLKQPVAATRIDRGTDVDFGSLTRAYLMPLQQSGALSVEYGTQVHDLKRLRHSDMTEADWRVVLKGPSGKKEVRAPFVFLGAGGGALPLLQRSGIPEAADFAGFPVSGLWLVCGDAQLADRQRAKVYGKAAVGAPPMSVPHLDTRWVDGKRSLLFGPFAGFSSKFLKQGSLLDLPASVRATNLLPMLQVGATNFELVQYLINQLRQSPTQRHEALQQFMPTARAEDWTLSVAGQRVQIIKRSKQGGRLQLGTEVVASGDGSLAALLGASPGASTAVTIMLEVLERCFKQRLDSDAWQQRLQALLPSIHEDPHQDPQVLNRMRERSDALLGLTA.

Belongs to the MQO family. FAD serves as cofactor.

The catalysed reaction is (S)-malate + a quinone = a quinol + oxaloacetate. It participates in carbohydrate metabolism; tricarboxylic acid cycle; oxaloacetate from (S)-malate (quinone route): step 1/1. This is Probable malate:quinone oxidoreductase from Synechococcus sp. (strain CC9605).